The primary structure comprises 430 residues: Divergent protein kinase domain 2A (430 aa).

Positions 1 to 35 are cleaved as a signal peptide; that stretch reads MWRLVPPKLGRLSRSLKLAALGSLLVLMVLHSPSL.

The protein belongs to the DIPK family.

It localises to the cytoplasmic vesicle. The protein resides in the COPI-coated vesicle. It is found in the golgi apparatus. Its subcellular location is the secreted. Its function is as follows. May play a role in cardiomyocyte proliferation through paracrine signaling and activation of the PPI3K-AKT-CDK7 signaling cascade. The chain is Divergent protein kinase domain 2A from Homo sapiens (Human).